We begin with the raw amino-acid sequence, 1887 residues long: Fatty acid synthase subunit alpha (1887 aa).

Residue lysine 37 forms a Glycyl lysine isopeptide (Lys-Gly) (interchain with G-Cter in ubiquitin) linkage. Serine 50 is modified (phosphoserine). The tract at residues 96 to 120 is disordered; sequence ELAAKEEPAKEEAPAPTPAASAPAP. The segment covering 98–108 has biased composition (basic and acidic residues); the sequence is AAKEEPAKEEA. The Carrier domain maps to 145-220; it reads VKASLLLHVL…ETFQDTFSGA (76 aa). Serine 180 is subject to O-(pantetheine 4'-phosphoryl)serine. Serine 523 is modified (phosphoserine). The tract at residues 675-874 is beta-ketoacyl reductase; sequence DKYVLITGAG…CGAIIGWTRG (200 aa). Serine 958 bears the Phosphoserine mark. The Ketosynthase family 3 (KS3) domain occupies 1123–1657; that stretch reads QEVIVEEDLE…QKGGQAIVVH (535 aa). Cysteine 1305 (for beta-ketoacyl synthase activity) is an active-site residue. At serine 1440 the chain carries Phosphoserine. Residues histidine 1542 and histidine 1583 each act as for beta-ketoacyl synthase activity in the active site. Aspartate 1772, valine 1773, and glutamate 1774 together coordinate Mg(2+). Acetyl-CoA contacts are provided by residues 1772-1774, tyrosine 1798, serine 1808, 1817-1827, 1841-1844, and 1871-1873; these read DVE, EAVFKSLGVKS, RVNK, and ISH. Serine 1872 and histidine 1873 together coordinate Mg(2+).

It belongs to the thiolase-like superfamily. Fungal fatty acid synthetase subunit alpha family. In terms of assembly, [Alpha(6)beta(6)] hexamers of two multifunctional subunits (alpha and beta). In terms of processing, 4'-phosphopantetheine is transferred from CoA to a specific serine of the Acyl carrier domain by the C-terminal PPT domain. This modification is essential for activity because fatty acids are bound in thioester linkage to the sulfhydryl of the prosthetic group.

It catalyses the reaction acetyl-CoA + n malonyl-CoA + 2n NADPH + 4n H(+) = a long-chain-acyl-CoA + n CoA + n CO2 + 2n NADP(+).. The enzyme catalyses a fatty acyl-[ACP] + malonyl-[ACP] + H(+) = a 3-oxoacyl-[ACP] + holo-[ACP] + CO2. The catalysed reaction is a (3R)-hydroxyacyl-[ACP] + NADP(+) = a 3-oxoacyl-[ACP] + NADPH + H(+). With respect to regulation, inhibited by cerulenin by covalent binding to active site of the ketoacyl synthase (KS) region. Fatty acid synthetase catalyzes the formation of long-chain fatty acids from acetyl-CoA, malonyl-CoA and NADPH. The alpha subunit contains domains for: acyl carrier protein, 3-oxoacyl-[acyl-carrier-protein] reductase, and 3-oxoacyl-[acyl-carrier-protein] synthase. This subunit coordinates the binding of the six beta subunits to the enzyme complex. In Saccharomyces cerevisiae (strain ATCC 204508 / S288c) (Baker's yeast), this protein is Fatty acid synthase subunit alpha (FAS2).